A 288-amino-acid polypeptide reads, in one-letter code: Transmembrane and coiled-coil domain-containing protein 5A (288 aa).

The stretch at 10–192 (KRNIISLNMD…ALFLEREVSK (183 aa)) forms a coiled coil. The chain crosses the membrane as a helical span at residues 224–244 (IFCCLFFITLFFIRLLSYMFF).

This sequence belongs to the TMCO5 family.

It is found in the endoplasmic reticulum membrane. The protein resides in the nucleus membrane. The sequence is that of Transmembrane and coiled-coil domain-containing protein 5A (TMCO5A) from Homo sapiens (Human).